The chain runs to 184 residues: ADP-ribosylation factor-like protein 2 (184 aa).

A lipid anchor (N-myristoyl glycine) is attached at G2. Residues 23–30 (GLDNAGKT), 66–70 (DVGGQ), G68, and 125–128 (NKSD) contribute to the GTP site.

Belongs to the small GTPase superfamily. Arf family.

The protein resides in the cytoplasm. It localises to the cell membrane. It is found in the cytoskeleton. The protein localises to the microtubule organizing center. Its subcellular location is the centrosome. Its function is as follows. GTP-binding protein that functions in embryogenesis, cytokinesis, germline development and microtubulule cytoskeleton dynamics. This chain is ADP-ribosylation factor-like protein 2 (evl-20.1), found in Caenorhabditis briggsae.